The chain runs to 475 residues: Ribosomal protein uS12 methylthiotransferase RimO (475 aa).

The MTTase N-terminal domain maps to arginine 5–alanine 114. 6 residues coordinate [4Fe-4S] cluster: cysteine 14, cysteine 49, cysteine 78, cysteine 174, cysteine 178, and cysteine 181. A Radical SAM core domain is found at leucine 160–aspartate 390. One can recognise a TRAM domain in the interval arginine 393 to threonine 461.

The protein belongs to the methylthiotransferase family. RimO subfamily. [4Fe-4S] cluster is required as a cofactor.

Its subcellular location is the cytoplasm. The catalysed reaction is L-aspartate(89)-[ribosomal protein uS12]-hydrogen + (sulfur carrier)-SH + AH2 + 2 S-adenosyl-L-methionine = 3-methylsulfanyl-L-aspartate(89)-[ribosomal protein uS12]-hydrogen + (sulfur carrier)-H + 5'-deoxyadenosine + L-methionine + A + S-adenosyl-L-homocysteine + 2 H(+). Catalyzes the methylthiolation of an aspartic acid residue of ribosomal protein uS12. The polypeptide is Ribosomal protein uS12 methylthiotransferase RimO (Acidothermus cellulolyticus (strain ATCC 43068 / DSM 8971 / 11B)).